A 64-amino-acid chain; its full sequence is MKASELRGKDAAGLNQELSELLKAQFSLRMQKATQQLQNTSQLKKVRKDIARVQTVLTQKANAK.

This sequence belongs to the universal ribosomal protein uL29 family.

This is Large ribosomal subunit protein uL29 from Cupriavidus necator (strain ATCC 17699 / DSM 428 / KCTC 22496 / NCIMB 10442 / H16 / Stanier 337) (Ralstonia eutropha).